A 96-amino-acid polypeptide reads, in one-letter code: Neurotoxin beta-KTx 31.1 (96 aa).

A signal peptide spans 1–21 (MQAKRTILLLLLLGMVALSSC). A propeptide spanning residues 22–29 (GLREKHVQ) is cleaved from the precursor. Residues 56–93 (QYGCPIIKDYCSFHCNDLEKHEGYCHGTKCKCNIPNQY) enclose the BetaSPN-type CS-alpha/beta domain. 3 disulfide bridges follow: Cys-59–Cys-80, Cys-66–Cys-85, and Cys-70–Cys-87.

Belongs to the long chain scorpion toxin family. Class 1 subfamily. As to expression, expressed by the venom gland.

Its subcellular location is the secreted. Functionally, inhibits voltage-gated potassium channel. This Lychas mucronatus (Chinese swimming scorpion) protein is Neurotoxin beta-KTx 31.1.